Here is a 447-residue protein sequence, read N- to C-terminus: Phosphoglucosamine mutase (447 aa).

Ser102 (phosphoserine intermediate) is an active-site residue. Residues Ser102, Asp241, Asp243, and Asp245 each coordinate Mg(2+). Position 102 is a phosphoserine (Ser102).

It belongs to the phosphohexose mutase family. Mg(2+) is required as a cofactor. Activated by phosphorylation.

It carries out the reaction alpha-D-glucosamine 1-phosphate = D-glucosamine 6-phosphate. Catalyzes the conversion of glucosamine-6-phosphate to glucosamine-1-phosphate. The chain is Phosphoglucosamine mutase from Pseudoalteromonas atlantica (strain T6c / ATCC BAA-1087).